Here is a 215-residue protein sequence, read N- to C-terminus: MDVEIYQEDGVESGETAALDPTVFDIEPNDHIIWLDVKRIQAHQRQGTSKTKERGEVRGSGRKLYRQKGTGNARVGDAQSPIRRGGGRAHGARPRDYAHDLNQKEKRLARRSALSYKAANDNIQVIENFSLDRPDTRGLTDLFELLGVEGQDILLATAEVEREVYLSSQNLPDVNVQEVQSINTVDILDADVVLLQEGALDWLTDVLSTDEAVPA.

A disordered region spans residues 43–101 (HQRQGTSKTKERGEVRGSGRKLYRQKGTGNARVGDAQSPIRRGGGRAHGARPRDYAHDL). The span at 50–59 (KTKERGEVRG) shows a compositional bias: basic and acidic residues.

Belongs to the universal ribosomal protein uL4 family. As to quaternary structure, part of the 50S ribosomal subunit.

Its function is as follows. One of the primary rRNA binding proteins, this protein initially binds near the 5'-end of the 23S rRNA. It is important during the early stages of 50S assembly. It makes multiple contacts with different domains of the 23S rRNA in the assembled 50S subunit and ribosome. Forms part of the polypeptide exit tunnel. This Salinibacter ruber (strain DSM 13855 / M31) protein is Large ribosomal subunit protein uL4.